An 828-amino-acid polypeptide reads, in one-letter code: Protein ELFN1 (828 aa).

Residues 1–27 (MAGRGWGALWVCVAAATLLHAGGLARA) form the signal peptide. Topologically, residues 28-418 (DCWLIEGDKG…VPSPSTATHY (391 aa)) are extracellular. An N-linked (GlcNAc...) asparagine glycan is attached at Asn-59. 5 LRR repeats span residues 61 to 82 (TIVDLRLNENRIRSVQYASLSR), 85 to 106 (NLTYLNLTKNEIGYIEDGAFSG), 109 to 130 (NLQVLQLGYNRLRNLTEGMLRG), 133 to 154 (KLEYLYLQANLIEVVMASSFWE), and 157 to 178 (NIVNIDLSMNRIQQLNSGTFAG). Residues Asn-85, Asn-90, and Asn-122 are each glycosylated (N-linked (GlcNAc...) asparagine). The region spanning 190 to 252 (NPFYCSCELL…LSKLQSVCTE (63 aa)) is the LRRCT domain. Asn-210 carries an N-linked (GlcNAc...) asparagine glycan. The disordered stretch occupies residues 259 to 291 (VVGPPRPASGRSQPGRSPPPPPPPEPSDMPCAD). Residues 274 to 285 (RSPPPPPPPEPS) show a composition bias toward pro residues. Positions 312–399 (QAEARPLIKV…HNHTCLTICL (88 aa)) constitute a Fibronectin type-III domain. The LRR 6 repeat unit spans residues 318-342 (LIKVKQLTQNSATITVQLPSPFHRM). An N-linked (GlcNAc...) asparagine glycan is attached at Asn-376. Residues 419-439 (IMTILGCLFGMVLVLGAVYYC) traverse the membrane as a helical segment. Topologically, residues 440–828 (LRRRRRQEEK…WKGVSAQHKS (389 aa)) are cytoplasmic. Ser-461 bears the Phosphoserine mark. 3 disordered regions span residues 517–552 (TPKASKGSYMEVRTGDPPERRDCELGRPGPDSQSSV), 624–649 (LQRHHSVEAAGPPRASTSSSGSVRSP), and 696–732 (KGRQYGEHRHSYPGSHPAEPPAPPGPPPPPPHEGLGR). The segment covering 529 to 541 (RTGDPPERRDCEL) has biased composition (basic and acidic residues). Low complexity predominate over residues 632 to 649 (AAGPPRASTSSSGSVRSP). Ser-645 carries the post-translational modification Phosphoserine. A compositionally biased stretch (basic and acidic residues) spans 696-705 (KGRQYGEHRH). Over residues 713–727 (AEPPAPPGPPPPPPH) the composition is skewed to pro residues.

Interacts with PPP1CA.

It is found in the membrane. The protein resides in the cell projection. Its subcellular location is the dendrite. Its function is as follows. Postsynaptic protein that regulates circuit dynamics in the central nervous system by modulating the temporal dynamics of interneuron recruitment. Specifically present in excitatory synapses onto oriens-lacunosum molecular (OLM) interneurons and acts as a regulator of presynaptic release probability to direct the formation of highly facilitating pyramidal-OLM synapses. Inhibits phosphatase activity of protein phosphatase 1 (PP1) complexes. The polypeptide is Protein ELFN1 (ELFN1) (Homo sapiens (Human)).